We begin with the raw amino-acid sequence, 669 residues long: MIGTSSGTSHNRSRKKKEQCGSCPNRFSKDKRQVAAEDSDTTEVESSTDEEERWKEVARAAEIPADYYNIQKLVKYIKAGNQTATIVSLCCLKDYDLSTQINQFAISDIGGLDVLVNILECSDTKCCLGALKVLSDITLNIDIRKTIVDLDGIPLIVDILNSSMKDLKTMAAETLANVCKVRLARKYVRTCGGIPKLVDLIDIKLSILKTPRDQLSPDDLESLDMTRAGARALFTLADSKHNMEQMRKSGIVPLMAQLLKSCHIDVVIPIMGTVRKCSSEPKFQLAITTEGMIPDIVSHLSSENTELKMEGSTAIYKCAFDGTTRDLVREAGGLEPLVTIIKDKNVRENKPLLRGATGAIWMCAVTDANVKVLDQLRTVNHLVALLNDECDEVLTNVTGAISECVRFQSNREQLRQAGGLPAMVSLLNSSHAPLLENLAKGLKECAEDPDSMRILEDLDAVRLIWSLLKNPTTRVQAHAAYAICPCVRNANDSAELVRSLVGAMELVVGLLKSKDIMVLSAVCAAIATIAQDQTNLAILTDLKVIYKLADLVQTTDDLLRMNLAAAVAACACFGNNTEELGRLRTVTPIVTYMTSDNPLVHRSTAMALEKLSMDPQNCITMHQSGVVPFLLECIGSTNKELQLAAAGCLRNIRELALRAEEYLLKIDDD.

Residues 1 to 10 (MIGTSSGTSH) show a composition bias toward polar residues. Residues 1 to 53 (MIGTSSGTSHNRSRKKKEQCGSCPNRFSKDKRQVAAEDSDTTEVESSTDEEER) form a disordered region. Positions 37–51 (EDSDTTEVESSTDEE) are enriched in acidic residues. ARM repeat units lie at residues 100–139 (QINQ…DITL), 141–180 (IDIR…NVCK), 240–279 (KHNM…KCSS), 281–320 (PKFQ…KCAF), 322–365 (GTTR…MCAV), 367–406 (DANV…ECVR), 408–447 (QSNR…ECAE), 492–531 (DSAE…TIAQ), 574–613 (GNNT…KLSM), and 615–654 (PQNC…NIRE).

As to expression, highly expressed in testis.

Functionally, important for spermatogenesis where it may have a role in sperm individualization. This chain is Armadillo repeat-containing protein gudu, found in Drosophila melanogaster (Fruit fly).